The following is a 120-amino-acid chain: HTH-type transcriptional regulator NmtR (120 aa).

The 95-residue stretch at 15–109 (LDSQAAAQVA…EAIYHSEHLH (95 aa)) folds into the HTH arsR-type domain. The segment at residues 49-72 (VTDLAEAIGMEQSAVSHQLRVLRN) is a DNA-binding region (H-T-H motif). Ni(2+)-binding residues include Asp91, His93, His104, and His107.

Homodimer.

Its activity is regulated as follows. Binding to DNA is inhibited by nickel and, to some extent, cobalt ions. Functionally, represses transcription of ctpJ/nmtA, by binding to its promoter region. The chain is HTH-type transcriptional regulator NmtR (nmtR) from Mycobacterium tuberculosis (strain ATCC 25618 / H37Rv).